The sequence spans 481 residues: Eukaryotic translation initiation factor 3 subunit L (481 aa).

The disordered stretch occupies residues 1 to 22; sequence MSVDARTAYPGSRPPANMQDES. Residues 262 to 457 form the PCI domain; sequence DAIRTFSHIL…DLDYAIEGNL (196 aa).

It belongs to the eIF-3 subunit L family. In terms of assembly, component of the eukaryotic translation initiation factor 3 (eIF-3) complex.

The protein localises to the cytoplasm. Its function is as follows. Component of the eukaryotic translation initiation factor 3 (eIF-3) complex, which is involved in protein synthesis of a specialized repertoire of mRNAs and, together with other initiation factors, stimulates binding of mRNA and methionyl-tRNAi to the 40S ribosome. The eIF-3 complex specifically targets and initiates translation of a subset of mRNAs involved in cell proliferation. This is Eukaryotic translation initiation factor 3 subunit L from Coccidioides immitis (strain RS) (Valley fever fungus).